The following is a 570-amino-acid chain: 15-cis-phytoene desaturase, chloroplastic/chromoplastic (570 aa).

The N-terminal 91 residues, 1–91 (MSIVGLVSVV…AQLSASFRSS (91 aa)), are a transit peptide targeting the chloroplast and chromoplast. FAD contacts are provided by residues 104–120 (GAGLAGLSTAKYLADAG), Ala108, 127–128 (ES), Lys135, 152–153 (HI), and Tyr158. Arg293 contacts substrate. Asp524 provides a ligand contact to FAD. A substrate-binding site is contributed by Ala532. Met534 provides a ligand contact to FAD.

This sequence belongs to the carotenoid/retinoid oxidoreductase family. Homotetramer. The cofactor is FAD. As to expression, expressed more strongly in flowers than in leaves.

The protein localises to the plastid. It localises to the chloroplast. Its subcellular location is the chromoplast. It is found in the membrane. It catalyses the reaction 2 a plastoquinone + 15-cis-phytoene = 9,9',15-tri-cis-zeta-carotene + 2 a plastoquinol. Its pathway is carotenoid biosynthesis; lycopene biosynthesis. Functionally, converts phytoene into zeta-carotene via the intermediary of phytofluene by the symmetrical introduction of two double bonds at the C-11 and C-11' positions of phytoene with a concomitant isomerization of two neighboring double bonds at the C9 and C9' positions from trans to cis. This chain is 15-cis-phytoene desaturase, chloroplastic/chromoplastic (PDS1), found in Narcissus pseudonarcissus (Daffodil).